The chain runs to 148 residues: MADQHRGVIGGGGYGDRGGQEQQEKQPFMMTALKTVTAATAGGSMLVLSGLILAGTVIALTVATPVLVIFSPVLVPAAIALALMAAGFVTSGGLGVAALSVFSWMYKYLTGKHPPGADQLDHAKARLASKARDIKEAAQHRIDQAQAS.

The tract at residues 1-21 (MADQHRGVIGGGGYGDRGGQE) is disordered. Ala2 bears the N-acetylalanine mark. Residues 2 to 34 (ADQHRGVIGGGGYGDRGGQEQQEKQPFMMTALK) form a polar region. Over residues 8-17 (VIGGGGYGDR) the composition is skewed to gly residues. The hydrophobic stretch occupies residues 35 to 106 (TVTAATAGGS…AALSVFSWMY (72 aa)). 3 consecutive transmembrane segments (helical) span residues 43–63 (GSML…LTVA), 66–86 (VLVI…LMAA), and 87–107 (GFVT…WMYK).

The protein belongs to the oleosin family.

The protein localises to the lipid droplet. The protein resides in the membrane. Its function is as follows. May have a structural role to stabilize the lipid body during desiccation of the seed by preventing coalescence of the oil. Probably interacts with both lipid and phospholipid moieties of lipid bodies. May also provide recognition signals for specific lipase anchorage in lipolysis during seedling growth. This Oryza sativa subsp. japonica (Rice) protein is Oleosin 16 kDa (OLE16).